Consider the following 474-residue polypeptide: PTS system N-acetylmuramic acid-specific EIIBC component (474 aa).

Positions 1-89 (MAKEISSELL…SELLGEAPVQ (89 aa)) constitute a PTS EIIB type-1 domain. Over 1–123 (MAKEISSELL…LAKFATIFTP (123 aa)) the chain is Cytoplasmic. C29 (phosphocysteine intermediate; for EIIB activity) is an active-site residue. A PTS EIIC type-1 domain is found at 115 to 474 (AKFATIFTPL…LFGCRNVNLD (360 aa)). A helical membrane pass occupies residues 124–144 (LIPGFIAAGLLLGIATLIATV). Residues 145–157 (MHVPADAQGTLPD) lie on the Periplasmic side of the membrane. Residues 158 to 178 (ALNFMKVFSKGLFTFLVILVG) traverse the membrane as a helical segment. Over 179–180 (YN) the chain is Cytoplasmic. Residues 181 to 201 (AAQAFGGTGVNGAIIAALFLL) form a helical membrane-spanning segment. Topologically, residues 202–217 (GYNPAATTGYYAGFHD) are periplasmic. The helical transmembrane segment at 218-238 (FFGLPIDPRGNIIGVLIAAWA) threads the bilayer. Residues 239–260 (CARIEGMVRRFMPDDLDMLLTS) are Cytoplasmic-facing. Residues 261–281 (LITLLITATLAYLIIMPLGGW) form a helical membrane-spanning segment. Residues 282-301 (LFEGMSWLFMHLNSNPLGCA) are Periplasmic-facing. The chain crosses the membrane as a helical span at residues 302 to 322 (VLAGLFLIAVVFGVHQGFIPV). At 323-334 (YLALMDSQGFNS) the chain is on the cytoplasmic side. Residues 335 to 355 (LFPILSMAGAGQVGAALALYW) form a helical membrane-spanning segment. Topologically, residues 356–368 (RAQPHSGLRSQVR) are periplasmic. The chain crosses the membrane as a helical span at residues 369–389 (GAIIPGLLGVGEPLIYGVTLP). Topologically, residues 390-393 (RMKP) are cytoplasmic. Residues 394–414 (FITACLGGAAGGLFIGLIAWW) form a helical membrane-spanning segment. Residues 415–440 (GLPMGLNSAFGPSGLVALPLMTSAQG) lie on the Periplasmic side of the membrane. Residues 441–461 (ILPAMAIYAGGILVAWVCGFI) form a helical membrane-spanning segment. The Cytoplasmic segment spans residues 462 to 474 (FTTLFGCRNVNLD).

It localises to the cell inner membrane. The enzyme catalyses N-acetyl-beta-D-muramate(out) + N(pros)-phospho-L-histidyl-[protein] = N-acetyl-beta-D-muramate 6-phosphate(in) + L-histidyl-[protein]. Its function is as follows. The phosphoenolpyruvate-dependent sugar phosphotransferase system (sugar PTS), a major carbohydrate active transport system, catalyzes the phosphorylation of incoming sugar substrates concomitantly with their translocation across the cell membrane. This system is involved in N-acetylmuramic acid (MurNAc) transport, yielding cytoplasmic MurNAc-6-P. Is also able to take up anhydro-N-acetylmuramic acid (anhMurNAc), but cannot phosphorylate the carbon 6, probably because of the 1,6-anhydro ring. The chain is PTS system N-acetylmuramic acid-specific EIIBC component (murP) from Shigella dysenteriae serotype 1 (strain Sd197).